A 188-amino-acid polypeptide reads, in one-letter code: Small ribosomal subunit protein uS7 (188 aa).

This sequence belongs to the universal ribosomal protein uS7 family. In terms of assembly, part of the 30S ribosomal subunit.

In terms of biological role, one of the primary rRNA binding proteins, it binds directly to 16S rRNA where it nucleates assembly of the head domain of the 30S subunit. Is located at the subunit interface close to the decoding center. This Methanococcus maripaludis (strain DSM 14266 / JCM 13030 / NBRC 101832 / S2 / LL) protein is Small ribosomal subunit protein uS7.